Reading from the N-terminus, the 124-residue chain is MMKRMVILRRCEPPPPQPAAAVVAAMGGCCGRVRYGECRRNHAARMGGHAVDGCREFLAEGEEGTGGALRCAACGCHRSFHRRVVVVQQCCACDTAAAAAAAGGWEWRDCSPESSSSASSTTAS.

A ZF-HD dimerization-type; degenerate zinc finger spans residues 35 to 84 (YGECRRNHAARMGGHAVDGCREFLAEGEEGTGGALRCAACGCHRSFHRRV).

In terms of assembly, homo- and heterodimers.

Its subcellular location is the cytoplasm. Inhibits zinc finger homeodomain (ZHD) transcription factors, by interacting with them to prevent both their nuclear localization and their DNA-binding properties. The sequence is that of Mini zinc finger protein 4 (MIF4) from Oryza sativa subsp. japonica (Rice).